Here is a 437-residue protein sequence, read N- to C-terminus: Protein translocase subunit SecY (437 aa).

Helical transmembrane passes span 19-39, 69-89, 122-142, 157-177, 189-209, 219-239, 275-295, 318-338, 378-398, and 400-420; these read LFTL…IPGV, LLQI…SIIL, VALA…GALF, IFTT…VMWL, GMSI…LWAI, WIEF…VVFV, GVIP…IVQF, HIIL…AISF, GSLY…GFGA, and QNFP…LETV.

This sequence belongs to the SecY/SEC61-alpha family. Component of the Sec protein translocase complex. Heterotrimer consisting of SecY, SecE and SecG subunits. The heterotrimers can form oligomers, although 1 heterotrimer is thought to be able to translocate proteins. Interacts with the ribosome. Interacts with SecDF, and other proteins may be involved. Interacts with SecA.

Its subcellular location is the cell membrane. Its function is as follows. The central subunit of the protein translocation channel SecYEG. Consists of two halves formed by TMs 1-5 and 6-10. These two domains form a lateral gate at the front which open onto the bilayer between TMs 2 and 7, and are clamped together by SecE at the back. The channel is closed by both a pore ring composed of hydrophobic SecY resides and a short helix (helix 2A) on the extracellular side of the membrane which forms a plug. The plug probably moves laterally to allow the channel to open. The ring and the pore may move independently. The sequence is that of Protein translocase subunit SecY from Streptomyces coelicolor (strain ATCC BAA-471 / A3(2) / M145).